Here is a 214-residue protein sequence, read N- to C-terminus: MQAFTQLNGLVAPLDRANVDTDAIIPKQFLKSIKRAGFGPNAFDEWRYLDQGEPGKDNSKRPLNPDFPLNFPRYQGASILLTRENFGCGSSREHAPWALLDYGFRAIIAPSFADIFFNNCFKNGILPIVLDAEIVDSLFKEVEANEGYHLLVDLQSQIVQTPGGRHYAFEIDPFRKHCLLNGLDDIGLTLQHVDEIKAFEARHKAAQPWLFNES.

The protein belongs to the LeuD family. LeuD type 1 subfamily. As to quaternary structure, heterodimer of LeuC and LeuD.

The catalysed reaction is (2R,3S)-3-isopropylmalate = (2S)-2-isopropylmalate. Its pathway is amino-acid biosynthesis; L-leucine biosynthesis; L-leucine from 3-methyl-2-oxobutanoate: step 2/4. In terms of biological role, catalyzes the isomerization between 2-isopropylmalate and 3-isopropylmalate, via the formation of 2-isopropylmaleate. This chain is 3-isopropylmalate dehydratase small subunit, found in Methylobacillus flagellatus (strain ATCC 51484 / DSM 6875 / VKM B-1610 / KT).